The sequence spans 2201 residues: Tenascin (2201 aa).

An N-terminal signal peptide occupies residues Met-1 to Gly-22. Asn-38 is a glycosylation site (N-linked (GlcNAc...) asparagine). 2 positions are modified to phosphoserine: Ser-65 and Ser-70. At Ser-72 the chain carries Phosphoserine; by FAM20C. An O-linked (Xyl...) (chondroitin sulfate) serine glycan is attached at Ser-72. A coiled-coil region spans residues Asp-118–Gly-145. 2 N-linked (GlcNAc...) asparagine glycosylation sites follow: Asn-166 and Asn-184. The EGF-like 1; incomplete domain maps to Cys-174–Ser-186. EGF-like domains lie at Ser-186–Ser-217, Ser-217–Ser-248, Ser-248–Asn-280, Asn-280–Ser-311, Ser-311–Gly-342, Gly-342–Ser-373, Ser-373–Gly-404, Gly-404–Ser-435, Ser-435–Ser-466, Ser-466–Arg-497, Arg-497–Ala-528, Ala-528–Lys-559, Lys-559–Gly-590, and Gly-590–Ser-621. Cystine bridges form between Cys-190–Cys-200, Cys-194–Cys-205, Cys-207–Cys-216, Cys-221–Cys-231, Cys-225–Cys-236, Cys-238–Cys-247, Cys-252–Cys-263, Cys-256–Cys-268, Cys-270–Cys-279, Cys-284–Cys-294, Cys-288–Cys-299, Cys-301–Cys-310, Cys-315–Cys-325, Cys-319–Cys-330, Cys-332–Cys-341, Cys-346–Cys-356, Cys-350–Cys-361, Cys-363–Cys-372, Cys-377–Cys-387, Cys-381–Cys-392, Cys-394–Cys-403, Cys-408–Cys-418, Cys-412–Cys-423, Cys-425–Cys-434, Cys-439–Cys-449, Cys-443–Cys-454, Cys-456–Cys-465, Cys-470–Cys-480, Cys-474–Cys-485, Cys-487–Cys-496, Cys-501–Cys-511, Cys-505–Cys-516, Cys-518–Cys-527, Cys-532–Cys-542, Cys-536–Cys-547, Cys-549–Cys-558, Cys-563–Cys-573, Cys-567–Cys-578, Cys-580–Cys-589, Cys-594–Cys-604, Cys-598–Cys-609, and Cys-611–Cys-620. N-linked (GlcNAc...) asparagine glycosylation occurs at Asn-327. Fibronectin type-III domains are found at residues Pro-625 to Pro-715, Glu-716 to Asp-804, Ala-805 to Asp-894, Ala-895 to Asp-990, Leu-991 to Pro-1075, Glu-1076 to Thr-1165, Asn-1167 to Val-1256, Asp-1258 to Leu-1350, Gly-1351 to Pro-1439, Glu-1440 to Leu-1531, Glu-1533 to Pro-1621, Glu-1622 to Gly-1711, Ser-1712 to Gly-1801, Pro-1802 to Asp-1888, and Ser-1889 to Leu-1977. Asn-788 carries an N-linked (GlcNAc...) asparagine glycan. Position 905 is a phosphothreonine (Thr-905). N-linked (GlcNAc...) asparagine glycans are attached at residues Asn-1018, Asn-1034, Asn-1079, Asn-1093, Asn-1119, Asn-1184, Asn-1210, Asn-1261, Asn-1275, Asn-1301, Asn-1366, Asn-1392, Asn-1445, Asn-1455, Asn-1485, and Asn-1534. The N-linked (GlcNAc...) asparagine glycan is linked to Asn-1809. Positions Gly-1975 to Asn-2190 constitute a Fibrinogen C-terminal domain. Residue Asn-2162 is glycosylated (N-linked (GlcNAc...) asparagine).

Belongs to the tenascin family. In terms of assembly, homohexamer; disulfide-linked. A homotrimer may be formed in the triple coiled-coil region and may be stabilized by disulfide rings at both ends. Two of such half-hexabrachions may be disulfide linked within the central globule. Interacts with CSPG4. Interacts (via the 3rd fibronectin type-III domain) with integrin ITGA9:ITGB1. As to expression, detected in fibroblasts (at protein level).

It is found in the secreted. It localises to the extracellular space. The protein localises to the extracellular matrix. Extracellular matrix protein implicated in guidance of migrating neurons as well as axons during development, synaptic plasticity as well as neuronal regeneration. Promotes neurite outgrowth from cortical neurons grown on a monolayer of astrocytes. Ligand for integrins alpha-8/beta-1, alpha-9/beta-1, alpha-V/beta-3 and alpha-V/beta-6. In tumors, stimulates angiogenesis by elongation, migration and sprouting of endothelial cells. This Homo sapiens (Human) protein is Tenascin (TNC).